A 200-amino-acid chain; its full sequence is NADH-quinone oxidoreductase subunit C (200 aa).

The protein belongs to the complex I 30 kDa subunit family. As to quaternary structure, NDH-1 is composed of 14 different subunits. Subunits NuoB, C, D, E, F, and G constitute the peripheral sector of the complex.

The protein localises to the cell inner membrane. It carries out the reaction a quinone + NADH + 5 H(+)(in) = a quinol + NAD(+) + 4 H(+)(out). NDH-1 shuttles electrons from NADH, via FMN and iron-sulfur (Fe-S) centers, to quinones in the respiratory chain. The immediate electron acceptor for the enzyme in this species is believed to be ubiquinone. Couples the redox reaction to proton translocation (for every two electrons transferred, four hydrogen ions are translocated across the cytoplasmic membrane), and thus conserves the redox energy in a proton gradient. This Thiobacillus denitrificans (strain ATCC 25259 / T1) protein is NADH-quinone oxidoreductase subunit C.